The chain runs to 278 residues: tRNA pseudouridine synthase A (278 aa).

D52 (nucleophile) is an active-site residue. Residue Y111 participates in substrate binding. Residues 253–264 show a composition bias toward low complexity; the sequence is AKAGPLEAAPLG. The disordered stretch occupies residues 253–278; it reads AKAGPLEAAPLGEAPLKEATLKEDWR. The span at 267 to 278 shows a compositional bias: basic and acidic residues; that stretch reads PLKEATLKEDWR.

The protein belongs to the tRNA pseudouridine synthase TruA family. Homodimer.

It carries out the reaction uridine(38/39/40) in tRNA = pseudouridine(38/39/40) in tRNA. Its function is as follows. Formation of pseudouridine at positions 38, 39 and 40 in the anticodon stem and loop of transfer RNAs. This is tRNA pseudouridine synthase A from Rhodospirillum rubrum (strain ATCC 11170 / ATH 1.1.1 / DSM 467 / LMG 4362 / NCIMB 8255 / S1).